The sequence spans 292 residues: MSKKLLYAAQMTAFDKDGNINLDGIRALVRYNIDVNKVDGLYVCGSTGEAFMLNTDEKKQVMETVYDEANGAIDLVAQVGSLNLKEAKELAKFATDLGYPKLSAVTPFYYNFTFEQIKDYYNEILKDVDNKLLIYSIPALTGVALTTDQFAELFENPKIIGIKYTNADFYLLERVRNAFPDKLILSGFDEMLLPALALNVDGCIGSTYNLNAPRVREEMDAFEAGDIDKARQLQNISNDMITDLIANDIYPTLKLVMKHMGVDAGYVKKPMSHPTPEMEAGATAIYEKYFKN.

Ser-46 and Thr-47 together coordinate aceneuramate. Tyr-135 acts as the Proton donor in catalysis. The active-site Schiff-base intermediate with substrate is the Lys-163. Thr-165, Gly-187, Asp-189, Glu-190, and Ser-206 together coordinate aceneuramate.

Belongs to the DapA family. NanA subfamily. In terms of assembly, homotetramer.

It is found in the cytoplasm. It carries out the reaction aceneuramate = aldehydo-N-acetyl-D-mannosamine + pyruvate. Its pathway is amino-sugar metabolism; N-acetylneuraminate degradation; D-fructose 6-phosphate from N-acetylneuraminate: step 1/5. In terms of biological role, catalyzes the reversible aldol cleavage of N-acetylneuraminic acid (sialic acid; Neu5Ac) to form pyruvate and N-acetylmannosamine (ManNAc) via a Schiff base intermediate. The polypeptide is N-acetylneuraminate lyase (Lactiplantibacillus plantarum (strain ATCC BAA-793 / NCIMB 8826 / WCFS1) (Lactobacillus plantarum)).